The primary structure comprises 175 residues: Centrosomal protein 20 (175 aa).

Residues 1–104 (MATIAELKAV…IVEDANGKSV (104 aa)) are necessary and sufficient for homooligomerization and localization to centrosomes and pericentriolar satellites. The region spanning 49 to 81 (ENLLINELIREYLEFNKYKYSASVLTAEAGQPE) is the LisH domain. A disordered region spans residues 137–166 (RQNLAKPSTERNQKDRIPEPGRMAGTSIEE). The segment covering 144-155 (STERNQKDRIPE) has biased composition (basic and acidic residues).

The protein belongs to the CEP43 family. Homooligomer; probably required for localization to centrosomes.

The protein resides in the cell projection. It is found in the cilium. It localises to the cytoplasm. The protein localises to the cytoskeleton. Its subcellular location is the cilium basal body. The protein resides in the microtubule organizing center. It is found in the centrosome. It localises to the cytoplasmic granule. The protein localises to the centriolar satellite. Involved in the biogenesis of cilia. Required for the recruitment of PLK1 to centrosomes and S phase progression. The polypeptide is Centrosomal protein 20 (CEP20) (Gallus gallus (Chicken)).